The chain runs to 348 residues: Nuclear receptor subfamily 1 group I member 3 (348 aa).

The segment at residues 8–83 (PRSCMVCGDR…AGMKKEMILS (76 aa)) is a DNA-binding region (nuclear receptor). An NR C4-type zinc finger spans residues 11–31 (CMVCGDRATGYHFHALTCEGC). At Thr-38 the chain carries Phosphothreonine; by PKC. The segment at 47 to 71 (CPFAGNCKVNKAQRRHCPACRLQKC) adopts an NR C4-type zinc-finger fold. An NR LBD domain is found at 109–348 (GQQELVQTLL…MMPLLQEICS (240 aa)).

The protein belongs to the nuclear hormone receptor family. NR1 subfamily. In terms of assembly, heterodimer of NR1I3 and RXR. Interacts with PSMC4. Interacts with ECT2. Directly interacts with DNAJC7; this complex may also include HSP90. Interacts with CRY1. Interacts with CRY2 in a ligand-dependent manner. Post-translationally, phosphorylated at Thr-38 by PKC, dephosphorylation of Thr-38 is required for nuclear translocation and activation.

It is found in the nucleus. The protein localises to the cytoplasm. It localises to the cytoskeleton. Binds and transactivates the retinoic acid response elements that control expression of the retinoic acid receptor beta 2 and alcohol dehydrogenase 3 genes. Transactivates both the phenobarbital responsive element module of the human CYP2B6 gene and the CYP3A4 xenobiotic response element. In Callorhinus ursinus (Northern fur seal), this protein is Nuclear receptor subfamily 1 group I member 3 (NR1I3).